We begin with the raw amino-acid sequence, 398 residues long: Glucose-1-phosphate adenylyltransferase (398 aa).

Residues Tyr-100, Gly-165, 180–181 (EK), and Ser-191 each bind alpha-D-glucose 1-phosphate.

This sequence belongs to the bacterial/plant glucose-1-phosphate adenylyltransferase family. Homotetramer.

The catalysed reaction is alpha-D-glucose 1-phosphate + ATP + H(+) = ADP-alpha-D-glucose + diphosphate. It participates in glycan biosynthesis; glycogen biosynthesis. Its function is as follows. Involved in the biosynthesis of ADP-glucose, a building block required for the elongation reactions to produce glycogen. Catalyzes the reaction between ATP and alpha-D-glucose 1-phosphate (G1P) to produce pyrophosphate and ADP-Glc. This chain is Glucose-1-phosphate adenylyltransferase, found in Desulfitobacterium hafniense (strain Y51).